The chain runs to 1320 residues: Bifunctional protein PutA (1320 aa).

A proline dehydrogenase region spans residues 228 to 574; that stretch reads LSRSLNRIIG…SFVNRIADTS (347 aa). The aldehyde dehydrogenase stretch occupies residues 653 to 1119; that stretch reads QPVAAGEMSP…LANRPESALA (467 aa). Catalysis depends on residues Glu883 and Cys917.

It in the N-terminal section; belongs to the proline dehydrogenase family. In the C-terminal section; belongs to the aldehyde dehydrogenase family. In terms of assembly, homodimer. It depends on FAD as a cofactor.

It carries out the reaction L-proline + a quinone = (S)-1-pyrroline-5-carboxylate + a quinol + H(+). The enzyme catalyses L-glutamate 5-semialdehyde + NAD(+) + H2O = L-glutamate + NADH + 2 H(+). It participates in amino-acid degradation; L-proline degradation into L-glutamate; L-glutamate from L-proline: step 1/2. Its pathway is amino-acid degradation; L-proline degradation into L-glutamate; L-glutamate from L-proline: step 2/2. Functionally, oxidizes proline to glutamate for use as a carbon and nitrogen source and also function as a transcriptional repressor of the put operon. This chain is Bifunctional protein PutA (putA), found in Escherichia coli (strain K12).